The following is a 245-amino-acid chain: Lactate utilization protein A (245 aa).

It belongs to the LutA/YkgE family.

Functionally, is involved in L-lactate degradation and allows cells to grow with lactate as the sole carbon source. The chain is Lactate utilization protein A from Exiguobacterium sp. (strain ATCC BAA-1283 / AT1b).